The primary structure comprises 83 residues: Small ribosomal subunit protein uS17 (83 aa).

Belongs to the universal ribosomal protein uS17 family. In terms of assembly, part of the 30S ribosomal subunit.

Functionally, one of the primary rRNA binding proteins, it binds specifically to the 5'-end of 16S ribosomal RNA. The protein is Small ribosomal subunit protein uS17 of Francisella tularensis subsp. tularensis (strain FSC 198).